We begin with the raw amino-acid sequence, 348 residues long: 5-deoxyribose 1-phosphate isomerase (348 aa).

Substrate contacts are provided by residues 49–51, Arg92, and Gln199; that span reads RGA. Asp240 (proton donor) is an active-site residue. Substrate is bound at residue 250-251; the sequence is NK.

Belongs to the EIF-2B alpha/beta/delta subunits family. DrdI subfamily. In terms of assembly, homodimer.

It catalyses the reaction 5-deoxy-alpha-D-ribose 1-phosphate = 5-deoxy-D-ribulose 1-phosphate. The catalysed reaction is 5-(methylsulfanyl)-alpha-D-ribose 1-phosphate = 5-(methylsulfanyl)-D-ribulose 1-phosphate. It participates in carbohydrate degradation. Its function is as follows. Catalyzes the isomerization of 5-deoxy-alpha-D-ribose 1-phosphate to 5-deoxy-D-ribulose 1-phosphate, as part of a 5-deoxyribose salvage pathway that recycles this toxic radical SAM enzyme by-product to mainstream metabolites. Also seems to be able to catalyze the conversion of methylthioribose-1-phosphate (MTR-1-P) into methylthioribulose-1-phosphate (MTRu-1-P). However this enzyme may not function in methionine salvage in B.thuringiensis since it exists a paralog (MtnA) present in the methionine salvage pathway cluster. In Bacillus thuringiensis serovar kurstaki (strain ATCC 35866 / NRRL B-4488 / HD73), this protein is 5-deoxyribose 1-phosphate isomerase.